A 491-amino-acid polypeptide reads, in one-letter code: Ketol-acid reductoisomerase (NADP(+)) (491 aa).

The region spanning 15 to 208 (AQLGKCRFMG…GGHRAGVLES (194 aa)) is the KARI N-terminal Rossmann domain. Residues 45–48 (CGAQ), arginine 68, arginine 76, serine 78, and 108–110 (DKQ) each bind NADP(+). Histidine 132 is a catalytic residue. Glycine 158 contributes to the NADP(+) binding site. KARI C-terminal knotted domains follow at residues 209–344 (SFVA…TAPQ) and 345–484 (FEGK…MTDM). Aspartate 217, glutamate 221, glutamate 389, and glutamate 393 together coordinate Mg(2+). Residue serine 414 coordinates substrate.

Belongs to the ketol-acid reductoisomerase family. Mg(2+) serves as cofactor.

It catalyses the reaction (2R)-2,3-dihydroxy-3-methylbutanoate + NADP(+) = (2S)-2-acetolactate + NADPH + H(+). The catalysed reaction is (2R,3R)-2,3-dihydroxy-3-methylpentanoate + NADP(+) = (S)-2-ethyl-2-hydroxy-3-oxobutanoate + NADPH + H(+). The protein operates within amino-acid biosynthesis; L-isoleucine biosynthesis; L-isoleucine from 2-oxobutanoate: step 2/4. It participates in amino-acid biosynthesis; L-valine biosynthesis; L-valine from pyruvate: step 2/4. In terms of biological role, involved in the biosynthesis of branched-chain amino acids (BCAA). Catalyzes an alkyl-migration followed by a ketol-acid reduction of (S)-2-acetolactate (S2AL) to yield (R)-2,3-dihydroxy-isovalerate. In the isomerase reaction, S2AL is rearranged via a Mg-dependent methyl migration to produce 3-hydroxy-3-methyl-2-ketobutyrate (HMKB). In the reductase reaction, this 2-ketoacid undergoes a metal-dependent reduction by NADPH to yield (R)-2,3-dihydroxy-isovalerate. This chain is Ketol-acid reductoisomerase (NADP(+)), found in Salmonella choleraesuis (strain SC-B67).